Reading from the N-terminus, the 538-residue chain is Mitochondrial distribution and morphology protein 34 (538 aa).

One can recognise an SMP-LTD domain in the interval 1–224 (MSFRFDRSVF…LPTALFNMSQ (224 aa)). Disordered stretches follow at residues 26–55 (ALNP…RKSG) and 231–251 (DGSR…NQPS).

Belongs to the MDM34 family. Component of the ER-mitochondria encounter structure (ERMES) or MDM complex, composed of MMM1, MDM10, MDM12 and MDM34.

It localises to the mitochondrion outer membrane. Its function is as follows. Component of the ERMES/MDM complex, which serves as a molecular tether to connect the endoplasmic reticulum (ER) and mitochondria. Components of this complex are involved in the control of mitochondrial shape and protein biogenesis, and function in nonvesicular lipid trafficking between the ER and mitochondria. MDM34 is required for the interaction of the ER-resident membrane protein MMM1 and the outer mitochondrial membrane-resident beta-barrel protein MDM10. In Candida glabrata (strain ATCC 2001 / BCRC 20586 / JCM 3761 / NBRC 0622 / NRRL Y-65 / CBS 138) (Yeast), this protein is Mitochondrial distribution and morphology protein 34.